Reading from the N-terminus, the 98-residue chain is NADH-ubiquinone oxidoreductase chain 4L (98 aa).

3 helical membrane passes run 1–21 (MPVVYVNIFLAFIVSLVGLLI), 29–49 (SLLCLEGMMLSLFVMLTVTVL), and 61–81 (IILLVFAACEAALGLSLLVMV).

This sequence belongs to the complex I subunit 4L family. In terms of assembly, core subunit of respiratory chain NADH dehydrogenase (Complex I) which is composed of 45 different subunits.

It localises to the mitochondrion inner membrane. The enzyme catalyses a ubiquinone + NADH + 5 H(+)(in) = a ubiquinol + NAD(+) + 4 H(+)(out). Core subunit of the mitochondrial membrane respiratory chain NADH dehydrogenase (Complex I) which catalyzes electron transfer from NADH through the respiratory chain, using ubiquinone as an electron acceptor. Part of the enzyme membrane arm which is embedded in the lipid bilayer and involved in proton translocation. The polypeptide is NADH-ubiquinone oxidoreductase chain 4L (MT-ND4L) (Ursus maritimus (Polar bear)).